The chain runs to 349 residues: Aspartate-semialdehyde dehydrogenase (349 aa).

NADP(+) is bound by residues 12–15 (TGSV) and 39–40 (NS). A phosphate-binding site is contributed by arginine 113. The Acyl-thioester intermediate role is filled by cysteine 148. Residue glutamine 175 participates in substrate binding. 178 to 179 (SG) serves as a coordination point for NADP(+). Residue glutamate 201 participates in substrate binding. Lysine 204 serves as a coordination point for phosphate. Arginine 234 is a substrate binding site. Histidine 241 serves as the catalytic Proton acceptor. An NADP(+)-binding site is contributed by 326-327 (NT).

The protein belongs to the aspartate-semialdehyde dehydrogenase family. In terms of assembly, homodimer.

The catalysed reaction is L-aspartate 4-semialdehyde + phosphate + NADP(+) = 4-phospho-L-aspartate + NADPH + H(+). It functions in the pathway amino-acid biosynthesis; L-lysine biosynthesis via DAP pathway; (S)-tetrahydrodipicolinate from L-aspartate: step 2/4. It participates in amino-acid biosynthesis; L-methionine biosynthesis via de novo pathway; L-homoserine from L-aspartate: step 2/3. Its pathway is amino-acid biosynthesis; L-threonine biosynthesis; L-threonine from L-aspartate: step 2/5. In terms of biological role, catalyzes the NADPH-dependent formation of L-aspartate-semialdehyde (L-ASA) by the reductive dephosphorylation of L-aspartyl-4-phosphate. This is Aspartate-semialdehyde dehydrogenase from Leptospira interrogans serogroup Icterohaemorrhagiae serovar Lai (strain 56601).